The chain runs to 148 residues: Deoxyuridine 5'-triphosphate nucleotidohydrolase (148 aa).

Residues 67-69 (RSG), N80, 84-86 (LID), and M94 each bind substrate.

This sequence belongs to the dUTPase family. It depends on Mg(2+) as a cofactor.

The catalysed reaction is dUTP + H2O = dUMP + diphosphate + H(+). It participates in pyrimidine metabolism; dUMP biosynthesis; dUMP from dCTP (dUTP route): step 2/2. This enzyme is involved in nucleotide metabolism: it produces dUMP, the immediate precursor of thymidine nucleotides and it decreases the intracellular concentration of dUTP so that uracil cannot be incorporated into DNA. This is Deoxyuridine 5'-triphosphate nucleotidohydrolase from Paraburkholderia xenovorans (strain LB400).